The following is a 180-amino-acid chain: Isopentenyl-diphosphate Delta-isomerase (180 aa).

Mn(2+) is bound by residues His26 and His32. One can recognise a Nudix hydrolase domain in the interval 30-168 (ALHLAFSVLL…PELFTAWFPQ (139 aa)). Cys70 is a catalytic residue. Residue Cys70 participates in Mg(2+) binding. His72 lines the Mn(2+) pocket. Position 90 (Glu90) interacts with Mg(2+). Residues Glu117 and Glu119 each coordinate Mn(2+). Glu119 is an active-site residue.

It belongs to the IPP isomerase type 1 family. Mg(2+) is required as a cofactor. It depends on Mn(2+) as a cofactor.

It localises to the cytoplasm. The catalysed reaction is isopentenyl diphosphate = dimethylallyl diphosphate. Its pathway is isoprenoid biosynthesis; dimethylallyl diphosphate biosynthesis; dimethylallyl diphosphate from isopentenyl diphosphate: step 1/1. Functionally, catalyzes the 1,3-allylic rearrangement of the homoallylic substrate isopentenyl (IPP) to its highly electrophilic allylic isomer, dimethylallyl diphosphate (DMAPP). The polypeptide is Isopentenyl-diphosphate Delta-isomerase (Photobacterium profundum (strain SS9)).